We begin with the raw amino-acid sequence, 62 residues long: Sperm protamine P1 (62 aa).

Residues 1-62 (MARYRHSRSR…RYSRRRRRRY (62 aa)) form a disordered region.

Belongs to the protamine P1 family. Testis.

The protein resides in the nucleus. It localises to the chromosome. Protamines substitute for histones in the chromatin of sperm during the haploid phase of spermatogenesis. They compact sperm DNA into a highly condensed, stable and inactive complex. In Dendrolagus dorianus (Doria's tree-kangaroo), this protein is Sperm protamine P1 (PRM1).